We begin with the raw amino-acid sequence, 139 residues long: Superoxide dismutase [Cu-Zn] (139 aa).

Cysteine 6 carries S-palmitoyl cysteine lipidation. Residues histidine 47 and histidine 49 each contribute to the Cu cation site. Zn(2+)-binding residues include histidine 72, histidine 81, and aspartate 84. Residue histidine 114 participates in Cu cation binding. Over residues 118-129 (DDLGKGGNDESL) the composition is skewed to basic and acidic residues. The tract at residues 118–139 (DDLGKGGNDESLKTGNAGGRMA) is disordered.

It belongs to the Cu-Zn superoxide dismutase family. As to quaternary structure, homodimer. Cu cation serves as cofactor. The cofactor is Zn(2+).

Its subcellular location is the cytoplasm. It localises to the nucleus. It catalyses the reaction 2 superoxide + 2 H(+) = H2O2 + O2. In terms of biological role, destroys radicals which are normally produced within the cells and which are toxic to biological systems. The sequence is that of Superoxide dismutase [Cu-Zn] (sod1) from Lampanyctus crocodilus (Jewel lanternfish).